The following is a 312-amino-acid chain: Methionyl-tRNA formyltransferase (312 aa).

Residue 109–112 (SLLP) coordinates (6S)-5,6,7,8-tetrahydrofolate.

This sequence belongs to the Fmt family.

The catalysed reaction is L-methionyl-tRNA(fMet) + (6R)-10-formyltetrahydrofolate = N-formyl-L-methionyl-tRNA(fMet) + (6S)-5,6,7,8-tetrahydrofolate + H(+). In terms of biological role, attaches a formyl group to the free amino group of methionyl-tRNA(fMet). The formyl group appears to play a dual role in the initiator identity of N-formylmethionyl-tRNA by promoting its recognition by IF2 and preventing the misappropriation of this tRNA by the elongation apparatus. The sequence is that of Methionyl-tRNA formyltransferase from Anaeromyxobacter sp. (strain K).